The following is a 246-amino-acid chain: 3-deoxy-manno-octulosonate cytidylyltransferase (246 aa).

The protein belongs to the KdsB family.

It is found in the cytoplasm. It catalyses the reaction 3-deoxy-alpha-D-manno-oct-2-ulosonate + CTP = CMP-3-deoxy-beta-D-manno-octulosonate + diphosphate. Its pathway is nucleotide-sugar biosynthesis; CMP-3-deoxy-D-manno-octulosonate biosynthesis; CMP-3-deoxy-D-manno-octulosonate from 3-deoxy-D-manno-octulosonate and CTP: step 1/1. The protein operates within bacterial outer membrane biogenesis; lipopolysaccharide biosynthesis. In terms of biological role, activates KDO (a required 8-carbon sugar) for incorporation into bacterial lipopolysaccharide in Gram-negative bacteria. This chain is 3-deoxy-manno-octulosonate cytidylyltransferase, found in Rickettsia akari (strain Hartford).